A 109-amino-acid polypeptide reads, in one-letter code: Protein phosphatase 1 regulatory subunit 1C (109 aa).

The disordered stretch occupies residues 25 to 109; that stretch reads AEQIRKRRPT…TNEREEQRDH (85 aa). The segment covering 45 to 54 has biased composition (basic and acidic residues); it reads NPPEIDDKRG. The segment covering 55–75 has biased composition (polar residues); the sequence is PNTQGELQNASPKQRKQSVYT. The span at 100–109 shows a compositional bias: basic and acidic residues; that stretch reads TNEREEQRDH.

Belongs to the protein phosphatase inhibitor 1 family.

It localises to the cytoplasm. Its function is as follows. May increase cell susceptibility to TNF-induced apoptosis. The polypeptide is Protein phosphatase 1 regulatory subunit 1C (PPP1R1C) (Homo sapiens (Human)).